The sequence spans 483 residues: Glutamyl-tRNA(Gln) amidotransferase subunit A (483 aa).

Catalysis depends on charge relay system residues lysine 77 and serine 152. Serine 176 acts as the Acyl-ester intermediate in catalysis.

It belongs to the amidase family. GatA subfamily. In terms of assembly, heterotrimer of A, B and C subunits.

The catalysed reaction is L-glutamyl-tRNA(Gln) + L-glutamine + ATP + H2O = L-glutaminyl-tRNA(Gln) + L-glutamate + ADP + phosphate + H(+). Its function is as follows. Allows the formation of correctly charged Gln-tRNA(Gln) through the transamidation of misacylated Glu-tRNA(Gln) in organisms which lack glutaminyl-tRNA synthetase. The reaction takes place in the presence of glutamine and ATP through an activated gamma-phospho-Glu-tRNA(Gln). This is Glutamyl-tRNA(Gln) amidotransferase subunit A from Listeria monocytogenes serotype 4a (strain HCC23).